Here is a 221-residue protein sequence, read N- to C-terminus: Pyridoxine/pyridoxamine 5'-phosphate oxidase (221 aa).

Residues 1-21 (MDYSDPAELRESYDGAPLDPR) form a disordered region. Substrate contacts are provided by residues 10-13 (RESY) and Lys-68. Residues 63–68 (RTVLLK), 78–79 (FT), Arg-84, Lys-85, and Gln-107 each bind FMN. Residues Tyr-125, Arg-129, and Ser-133 each contribute to the substrate site. Residues 143–144 (QS) and Trp-189 contribute to the FMN site. Substrate is bound at residue 195-197 (RMH). Arg-199 serves as a coordination point for FMN.

This sequence belongs to the pyridoxamine 5'-phosphate oxidase family. As to quaternary structure, homodimer. Requires FMN as cofactor.

It carries out the reaction pyridoxamine 5'-phosphate + O2 + H2O = pyridoxal 5'-phosphate + H2O2 + NH4(+). The enzyme catalyses pyridoxine 5'-phosphate + O2 = pyridoxal 5'-phosphate + H2O2. It functions in the pathway cofactor metabolism; pyridoxal 5'-phosphate salvage; pyridoxal 5'-phosphate from pyridoxamine 5'-phosphate: step 1/1. Its pathway is cofactor metabolism; pyridoxal 5'-phosphate salvage; pyridoxal 5'-phosphate from pyridoxine 5'-phosphate: step 1/1. In terms of biological role, catalyzes the oxidation of either pyridoxine 5'-phosphate (PNP) or pyridoxamine 5'-phosphate (PMP) into pyridoxal 5'-phosphate (PLP). This chain is Pyridoxine/pyridoxamine 5'-phosphate oxidase, found in Thermobifida fusca (strain YX).